The sequence spans 332 residues: Fructose-1,6-bisphosphatase class 1 (332 aa).

Mg(2+) contacts are provided by Glu-94, Asp-116, Leu-118, and Asp-119. Substrate-binding positions include 119 to 122 (DGSS), Asn-211, Tyr-239, 257 to 259 (YLY), and Lys-269. Glu-275 is a binding site for Mg(2+).

The protein belongs to the FBPase class 1 family. In terms of assembly, homotetramer. Requires Mg(2+) as cofactor.

Its subcellular location is the cytoplasm. It carries out the reaction beta-D-fructose 1,6-bisphosphate + H2O = beta-D-fructose 6-phosphate + phosphate. It functions in the pathway carbohydrate biosynthesis; Calvin cycle. In Synechococcus sp. (strain JA-3-3Ab) (Cyanobacteria bacterium Yellowstone A-Prime), this protein is Fructose-1,6-bisphosphatase class 1.